A 517-amino-acid chain; its full sequence is Enantioselective amidase (517 aa).

Residues Lys96 and Ser173 each act as charge relay system in the active site. Residue Ser197 is the Acyl-ester intermediate of the active site.

It belongs to the amidase family. Homooctamer.

It catalyses the reaction a monocarboxylic acid amide + H2O = a monocarboxylate + NH4(+). The sequence is that of Enantioselective amidase (amdA) from Rhodococcus rhodochrous.